Here is a 953-residue protein sequence, read N- to C-terminus: 26S proteasome non-ATPase regulatory subunit 1 (953 aa).

An N-acetylmethionine modification is found at M1. T273 bears the Phosphothreonine mark. A disordered region spans residues 279-318 (PGSTNTGTVPGSEKDSDSMETEEKTSSAFVGKTPEASPEP). S290 is modified (phosphoserine). The span at 290–303 (SEKDSDSMETEEKT) shows a compositional bias: basic and acidic residues. K310 is modified (N6-acetyllysine). T311 is modified (phosphothreonine). Residue S315 is modified to Phosphoserine. PC repeat units follow at residues 403–436 (TATA…PGSA), 441–474 (GGLY…DIVR), 476–510 (GGSL…VTGE), 511–545 (AAGL…EKIL), 547–580 (GLAV…ILRR), 581–616 (SGMY…DVRR), 617–649 (AAVE…PHVR), 651–685 (GAAM…YVRQ), 686–726 (GALI…DVMA), and 729–761 (GAIL…PSVV). K720 is modified (N6-acetyllysine). The residue at position 830 (T830) is a Phosphothreonine. At S834 the chain carries Phosphoserine. 2 disordered regions span residues 839 to 881 (AKKK…LDNP) and 930 to 953 (AHGP…YIDD). Composition is skewed to basic and acidic residues over residues 842–852 (KEKEKEKKEEE) and 859–872 (AEKK…KEPE). Over residues 936–953 (EEEEQEPEPPEPFEYIDD) the composition is skewed to acidic residues.

The protein belongs to the proteasome subunit S1 family. Component of the 19S proteasome regulatory particle complex. The 26S proteasome consists of a 20S core particle (CP) and two 19S regulatory subunits (RP). The regulatory particle is made of a lid composed of 9 subunits, a base containing 6 ATPases and few additional components including PSMD1. Interacts with ADRM1. Interacts with ZFAND1.

In terms of biological role, component of the 26S proteasome, a multiprotein complex involved in the ATP-dependent degradation of ubiquitinated proteins. This complex plays a key role in the maintenance of protein homeostasis by removing misfolded or damaged proteins, which could impair cellular functions, and by removing proteins whose functions are no longer required. Therefore, the proteasome participates in numerous cellular processes, including cell cycle progression, apoptosis, or DNA damage repair. This chain is 26S proteasome non-ATPase regulatory subunit 1 (PSMD1), found in Homo sapiens (Human).